The chain runs to 519 residues: ATP synthase subunit beta (519 aa).

Low complexity predominate over residues 1–26; the sequence is MAKAATPKRAPARAAAIPAAATPAAK. The interval 1-40 is disordered; sequence MAKAATPKRAPARAAAIPAAATPAAKPAKRASTRSAAARS. 197–204 provides a ligand contact to ATP; the sequence is GGAGVGKT.

Belongs to the ATPase alpha/beta chains family. In terms of assembly, F-type ATPases have 2 components, CF(1) - the catalytic core - and CF(0) - the membrane proton channel. CF(1) has five subunits: alpha(3), beta(3), gamma(1), delta(1), epsilon(1). CF(0) has three main subunits: a(1), b(2) and c(9-12). The alpha and beta chains form an alternating ring which encloses part of the gamma chain. CF(1) is attached to CF(0) by a central stalk formed by the gamma and epsilon chains, while a peripheral stalk is formed by the delta and b chains.

It localises to the cell inner membrane. The catalysed reaction is ATP + H2O + 4 H(+)(in) = ADP + phosphate + 5 H(+)(out). Produces ATP from ADP in the presence of a proton gradient across the membrane. The catalytic sites are hosted primarily by the beta subunits. The polypeptide is ATP synthase subunit beta (Chelativorans sp. (strain BNC1)).